Reading from the N-terminus, the 204-residue chain is MTKRTVIIGVGGPVGSGKTLLLERLTRRMSDLNLAVITNDIYTKEDALFLAKNSSLDEDRIIGVETGGCPHTAIREDASMNFEAIETLQERFNHDLDVIFLESGGDNLAATFSPDLVDFTIYIIDVAQGEKIPRKAGQGMIKSDLFLINKTDLAPYVGANLDRMREDTLHFRNEDSFIFTNLNNDDNVKEVEEWIRKNFLLEDL.

12–19 (GPVGSGKT) contacts GTP.

This sequence belongs to the SIMIBI class G3E GTPase family. UreG subfamily. As to quaternary structure, homodimer. UreD, UreF and UreG form a complex that acts as a GTP-hydrolysis-dependent molecular chaperone, activating the urease apoprotein by helping to assemble the nickel containing metallocenter of UreC. The UreE protein probably delivers the nickel.

Its subcellular location is the cytoplasm. Facilitates the functional incorporation of the urease nickel metallocenter. This process requires GTP hydrolysis, probably effectuated by UreG. In Streptococcus salivarius (strain 57.I), this protein is Urease accessory protein UreG.